Here is a 1362-residue protein sequence, read N- to C-terminus: Dicer-like protein 2-2 (1362 aa).

A Helicase ATP-binding domain is found at 30–197; that stretch reads MLNESLKRNL…EIVESNLGSI (168 aa). 43-50 is an ATP binding site; that stretch reads MPTGTGKT. A DEAH box motif is present at residues 139-142; it reads DEAH. The 163-residue stretch at 343 to 505 folds into the Helicase C-terminal domain; that stretch reads LLDELSKAYR…KLQNAERRQI (163 aa). In terms of domain architecture, Dicer dsRNA-binding fold spans 536–630; the sequence is AVGYLYNFCS…VPTQVSDHLE (95 aa). RNase III domains are found at residues 889–1033 and 1075–1258; these read AQIL…TDGG and IVDM…IDSQ.

The protein belongs to the helicase family. Dicer subfamily.

In terms of biological role, dicer-like endonuclease involved in cleaving double-stranded RNA in the RNA interference (RNAi) pathway. Produces 21 to 25 bp dsRNAs (siRNAs) which target the selective destruction of homologous RNAs leading to sequence-specific suppression of gene expression, called post-transcriptional gene silencing (PTGS). Part of a broad host defense response against viral infection and transposons. The chain is Dicer-like protein 2-2 (dcl2-2) from Aspergillus niger (strain ATCC MYA-4892 / CBS 513.88 / FGSC A1513).